A 157-amino-acid polypeptide reads, in one-letter code: Small ribosomal subunit protein uS7 (157 aa).

It belongs to the universal ribosomal protein uS7 family. Part of the 30S ribosomal subunit. Contacts proteins S9 and S11.

Functionally, one of the primary rRNA binding proteins, it binds directly to 16S rRNA where it nucleates assembly of the head domain of the 30S subunit. Is located at the subunit interface close to the decoding center, probably blocks exit of the E-site tRNA. This Chlamydia abortus (strain DSM 27085 / S26/3) (Chlamydophila abortus) protein is Small ribosomal subunit protein uS7.